The following is a 349-amino-acid chain: Thylakoid lumenal 29 kDa protein, chloroplastic (349 aa).

Residue S155 is modified to Phosphoserine.

It belongs to the peroxidase family.

The protein localises to the plastid. Its subcellular location is the chloroplast thylakoid lumen. The protein is Thylakoid lumenal 29 kDa protein, chloroplastic (TL29) of Arabidopsis thaliana (Mouse-ear cress).